A 181-amino-acid chain; its full sequence is uncharacterized protein (181 aa).

This is an uncharacterized protein from Acidianus filamentous virus 2 (isolate Italy/Pozzuoli) (AFV-2).